Reading from the N-terminus, the 199-residue chain is N-(5'-phosphoribosyl)anthranilate isomerase (199 aa).

This sequence belongs to the TrpF family.

The enzyme catalyses N-(5-phospho-beta-D-ribosyl)anthranilate = 1-(2-carboxyphenylamino)-1-deoxy-D-ribulose 5-phosphate. Its pathway is amino-acid biosynthesis; L-tryptophan biosynthesis; L-tryptophan from chorismate: step 3/5. This is N-(5'-phosphoribosyl)anthranilate isomerase from Streptococcus pneumoniae (strain ATCC BAA-255 / R6).